We begin with the raw amino-acid sequence, 261 residues long: MVELRLPSNSVVKKGREHKAQQKMLKPRKVKVYRYDPDLDENPTIDSFEIDLSKTGPMVLDALIKIKNEIDSTLTFRRSCREGICGSCAMNIDGTNTLACIKPIEDISGDIKIYPLPHMKVVKDLVPDMSHFYAQYESIEPWLKNDSPAPSNSERLQSIKDREKLDGLYECILCACCSTSCPSYWWNGDKYLGPAILLQAYRWIADSRDDNTGARLEALEDPFKLYRCHTIMNCTKTCPKGLNPAKAIGRVKNLIAERHGV.

In terms of domain architecture, 2Fe-2S ferredoxin-type spans 28-119; that stretch reads RKVKVYRYDP…DIKIYPLPHM (92 aa). 3 residues coordinate [2Fe-2S] cluster: cysteine 80, cysteine 85, and cysteine 100. The region spanning 161 to 191 is the 4Fe-4S ferredoxin-type domain; it reads DREKLDGLYECILCACCSTSCPSYWWNGDKY. Residues cysteine 171, cysteine 174, and cysteine 177 each contribute to the [4Fe-4S] cluster site. Residue cysteine 181 coordinates [3Fe-4S] cluster. A ubiquinone is bound at residue tryptophan 186. 2 residues coordinate [3Fe-4S] cluster: cysteine 228 and cysteine 234. [4Fe-4S] cluster is bound at residue cysteine 238.

The protein belongs to the succinate dehydrogenase/fumarate reductase iron-sulfur protein family. Part of an enzyme complex containing four subunits: a flavoprotein, an iron-sulfur, cytochrome b-556, and a hydrophobic anchor protein. Requires [2Fe-2S] cluster as cofactor. [3Fe-4S] cluster serves as cofactor. It depends on [4Fe-4S] cluster as a cofactor.

The catalysed reaction is a quinone + succinate = fumarate + a quinol. The protein operates within carbohydrate metabolism; tricarboxylic acid cycle; fumarate from succinate (bacterial route): step 1/1. This Rickettsia prowazekii (strain Madrid E) protein is Succinate dehydrogenase iron-sulfur subunit (sdhB).